Here is a 109-residue protein sequence, read N- to C-terminus: Ribonuclease P protein component (109 aa).

It belongs to the RnpA family. Consists of a catalytic RNA component (M1 or rnpB) and a protein subunit.

The enzyme catalyses Endonucleolytic cleavage of RNA, removing 5'-extranucleotides from tRNA precursor.. RNaseP catalyzes the removal of the 5'-leader sequence from pre-tRNA to produce the mature 5'-terminus. It can also cleave other RNA substrates such as 4.5S RNA. The protein component plays an auxiliary but essential role in vivo by binding to the 5'-leader sequence and broadening the substrate specificity of the ribozyme. In Mycoplasma mycoides subsp. mycoides SC (strain CCUG 32753 / NCTC 10114 / PG1), this protein is Ribonuclease P protein component.